The sequence spans 736 residues: Prolyl 3-hydroxylase 3 (736 aa).

A signal peptide spans 1 to 20; the sequence is MLRLLRPLLLLLLLPPPGSP. TPR repeat units follow at residues 37 to 70, 154 to 187, and 216 to 249; these read PDLL…QAAL, REPY…NPMH, and HWAA…SLAQ. Residues 253-275 are disordered; the sequence is CRADCEGPEEQQGAEEEEDGAAS. The segment covering 258 to 272 has biased composition (acidic residues); sequence EGPEEQQGAEEEEDG. The TPR 4 repeat unit spans residues 316-349; the sequence is PNQLRRLHEAHAQVGNLSQAIENVLSVLLFYPED. N331 and N462 each carry an N-linked (GlcNAc...) asparagine glycan. The Fe2OG dioxygenase domain occupies 561 to 675; sequence THLVCRSAIE…RCALALWHTW (115 aa). Residues H584, D586, and H656 each contribute to the Fe cation site. R666 is an active-site residue. Residues 681-709 adopt a coiled-coil conformation; sequence EQEWIEAKELLQESQEEEEEEEEEMPSKD. Positions 689–736 are disordered; sequence ELLQESQEEEEEEEEEMPSKDPSPEPPSRRHQRVQDKTGRAPRVREEL. A compositionally biased stretch (acidic residues) spans 694–704; sequence SQEEEEEEEEE. Positions 721-736 are enriched in basic and acidic residues; sequence RVQDKTGRAPRVREEL. The Prevents secretion from ER signature appears at 733 to 736; the sequence is REEL.

This sequence belongs to the leprecan family. As to quaternary structure, identified in a complex with PLOD1 and P3H4. Fe cation serves as cofactor. The cofactor is L-ascorbate. In terms of tissue distribution, detected in fetal cartilage (at protein level). Weak expression in heart, lung, ovary and skeletal muscle.

Its subcellular location is the endoplasmic reticulum. The enzyme catalyses L-prolyl-[collagen] + 2-oxoglutarate + O2 = trans-3-hydroxy-L-prolyl-[collagen] + succinate + CO2. Functionally, part of a complex composed of PLOD1, P3H3 and P3H4 that catalyzes hydroxylation of lysine residues in collagen alpha chains and is required for normal assembly and cross-linkling of collagen fibrils. Required for normal hydroxylation of lysine residues in type I collagen chains in skin, bone, tendon, aorta and cornea. Required for normal skin stability via its role in hydroxylation of lysine residues in collagen alpha chains and in collagen fibril assembly. Apparently not required for normal prolyl 3-hydroxylation on collagen chains, possibly because it functions redundantly with other prolyl 3-hydroxylases. The sequence is that of Prolyl 3-hydroxylase 3 from Homo sapiens (Human).